The chain runs to 647 residues: XK-related protein 4 (647 aa).

The chain crosses the membrane as a helical span at residues 142–162; sequence WFGLTLFFVVLGSLSVQVFSF. The interval 193 to 238 is disordered; the sequence is VSSGSAAGEGEARPSTPQRQASNASKSNIAATNSGSNSNGATRTSG. Ser-197 carries the post-translational modification Phosphoserine. Residues 207-236 are compositionally biased toward polar residues; it reads STPQRQASNASKSNIAATNSGSNSNGATRT. The next 7 membrane-spanning stretches (helical) occupy residues 245-265, 328-348, 362-382, 393-415, 425-445, 454-474, and 484-504; these read CSFC…GQVW, LQAL…WALA, KPIS…TIAA, VFQL…WIVH, WEEI…WFNV, LFIY…LWYL, and FAIP…VFML.

It belongs to the XK family. Homodimer; homodimerization takes place upon caspase cleavage. Interacts with the processed C-terminus of XRCC4 (protein XRCC4, C-terminus); interaction promotes the phospholipid scramblase activity. Post-translationally, undergoes proteolytic processing by caspase-3 (CASP3), caspase-6 (CASP6) and caspase-7 (CASP7) to generate the XK-related protein 4, processed form, leading to its activation.

The protein resides in the cell membrane. The catalysed reaction is a 1,2-diacyl-sn-glycero-3-phospho-L-serine(in) = a 1,2-diacyl-sn-glycero-3-phospho-L-serine(out). Phospholipid scramblase activity is activated upon caspase cleavage to generate the XK-related protein 4, processed form. Does not act prior the onset of apoptosis. With respect to regulation, homodimerizes upon caspase cleavage. Phospholipid scramblase activity is activated following interaction with the processed C-terminus of XRCC4 (protein XRCC4, C-terminus). Its function is as follows. Phospholipid scramblase that promotes phosphatidylserine exposure on apoptotic cell surface. Phosphatidylserine is a specific marker only present at the surface of apoptotic cells and acts as a specific signal for engulfment. In Rattus norvegicus (Rat), this protein is XK-related protein 4.